Reading from the N-terminus, the 105-residue chain is Large ribosomal subunit protein uL24 (105 aa).

The protein belongs to the universal ribosomal protein uL24 family. Part of the 50S ribosomal subunit.

In terms of biological role, one of two assembly initiator proteins, it binds directly to the 5'-end of the 23S rRNA, where it nucleates assembly of the 50S subunit. One of the proteins that surrounds the polypeptide exit tunnel on the outside of the subunit. The polypeptide is Large ribosomal subunit protein uL24 (Buchnera aphidicola subsp. Cinara cedri (strain Cc)).